The following is a 282-amino-acid chain: MGFNEQENAFIEWYPRGYGVGFRVKERLFETQTKYQRLELYETEGFGKLLVLDGTVQLVEMGEESYHEPLVHPVMLAHPNPRRVLIIGGGDGGTLREVLRHKTVEKAIMVEIDEMVIEVSRIYMNVARGAFEDPRAELIVSDGVEYLKNTDEKFDVIIVDSTDPVGPAKMLFSEGFFRNAYEKLNDNGLYITQAGSVYLFTNELLDAYRDMGKVFDEVHYFSFPVIGYASPWSFLVGVKGDINFRKVDLQRAKELKLYYYDPERHETLFQMPKYVRELLEKV.

The PABS domain maps to 11 to 239; that stretch reads IEWYPRGYGV…SPWSFLVGVK (229 aa). Gln-36 is a binding site for S-methyl-5'-thioadenosine. Residues His-67 and Asp-91 each contribute to the spermidine site. Residues Glu-111 and 142–143 contribute to the S-methyl-5'-thioadenosine site; that span reads DG. Asp-160 serves as the catalytic Proton acceptor. 160–163 lines the spermidine pocket; that stretch reads DSTD. An S-methyl-5'-thioadenosine-binding site is contributed by Pro-167.

Belongs to the spermidine/spermine synthase family. Homodimer or homotetramer.

The protein resides in the cytoplasm. The catalysed reaction is S-adenosyl 3-(methylsulfanyl)propylamine + putrescine = S-methyl-5'-thioadenosine + spermidine + H(+). It functions in the pathway amine and polyamine biosynthesis; spermidine biosynthesis; spermidine from putrescine: step 1/1. Its function is as follows. Catalyzes the irreversible transfer of a propylamine group from the amino donor S-adenosylmethioninamine (decarboxy-AdoMet) to putrescine (1,4-diaminobutane) to yield spermidine. In Thermococcus onnurineus (strain NA1), this protein is Polyamine aminopropyltransferase.